Consider the following 215-residue polypeptide: Orotidine 5'-phosphate decarboxylase (215 aa).

Substrate contacts are provided by residues Asp12, Lys34, 60–69 (DFKVADIPNT), Ser117, 170–180 (PGVGAQGGSAA), Gly193, and Arg194. Residue Lys62 is the Proton donor of the active site.

The protein belongs to the OMP decarboxylase family. Type 1 subfamily. Homodimer.

It carries out the reaction orotidine 5'-phosphate + H(+) = UMP + CO2. Its pathway is pyrimidine metabolism; UMP biosynthesis via de novo pathway; UMP from orotate: step 2/2. In terms of biological role, catalyzes the decarboxylation of orotidine 5'-monophosphate (OMP) to uridine 5'-monophosphate (UMP). The chain is Orotidine 5'-phosphate decarboxylase from Methanococcoides burtonii (strain DSM 6242 / NBRC 107633 / OCM 468 / ACE-M).